The following is a 317-amino-acid chain: Ribonuclease Z (317 aa).

Residues His-61, His-63, Asp-65, His-66, His-153, Asp-221, and His-280 each coordinate Zn(2+). The active-site Proton acceptor is the Asp-65.

This sequence belongs to the RNase Z family. As to quaternary structure, homodimer. Zn(2+) is required as a cofactor.

It carries out the reaction Endonucleolytic cleavage of RNA, removing extra 3' nucleotides from tRNA precursor, generating 3' termini of tRNAs. A 3'-hydroxy group is left at the tRNA terminus and a 5'-phosphoryl group is left at the trailer molecule.. Functionally, zinc phosphodiesterase, which displays some tRNA 3'-processing endonuclease activity. Probably involved in tRNA maturation, by removing a 3'-trailer from precursor tRNA. The chain is Ribonuclease Z from Alkaliphilus oremlandii (strain OhILAs) (Clostridium oremlandii (strain OhILAs)).